A 759-amino-acid chain; its full sequence is Zinc finger protein 287 (759 aa).

In terms of domain architecture, SCAN box spans 42–124 (RRNFRNFPYP…ALVEDLTQIL (83 aa)). Residues 127 to 154 (EEAPQSSALPQDTPEDDPNHDPNPASQA) are disordered. In terms of domain architecture, KRAB spans 166-234 (VTFNDVAVDI…IKEIVEGPNP (69 aa)). C2H2-type zinc fingers lie at residues 366–388 (YSCN…RENH), 394–416 (YECE…QRMH), 422–444 (YECH…QRIH), 450–472 (YKCE…QRTH), 478–500 (YKCL…QRVH), 506–528 (YICN…QKIH), 534–556 (YKCN…QRIH), 562–584 (YKCT…QTTH), 590–612 (YICN…HRTH), 618–640 (YKCS…QRIH), 646–668 (FKCN…QRVH), 674–696 (YKCH…RRTH), 702–724 (YKCS…QRIH), and 730–752 (YGCR…QRVH).

The protein belongs to the krueppel C2H2-type zinc-finger protein family. Expressed in brain and at low levels in kidney and spleen and few hematopoietic cell lines.

Its subcellular location is the nucleus. In terms of biological role, may be involved in transcriptional regulation. In Mus musculus (Mouse), this protein is Zinc finger protein 287.